Reading from the N-terminus, the 364-residue chain is Fructose-bisphosphate aldolase B (364 aa).

The substrate site is built by Arg56 and Lys147. The active-site Proton acceptor is the Glu188. Catalysis depends on Lys230, which acts as the Schiff-base intermediate with dihydroxyacetone-P.

Belongs to the class I fructose-bisphosphate aldolase family. Homotetramer.

The protein localises to the cytoplasm. The protein resides in the cytoskeleton. Its subcellular location is the microtubule organizing center. It localises to the centrosome. It is found in the centriolar satellite. It catalyses the reaction beta-D-fructose 1,6-bisphosphate = D-glyceraldehyde 3-phosphate + dihydroxyacetone phosphate. The protein operates within carbohydrate degradation; glycolysis; D-glyceraldehyde 3-phosphate and glycerone phosphate from D-glucose: step 4/4. This is Fructose-bisphosphate aldolase B (aldob) from Sparus aurata (Gilthead sea bream).